Here is a 290-residue protein sequence, read N- to C-terminus: Enoyl-CoA hydratase, mitochondrial (290 aa).

The N-terminal 27 residues, Met1–Phe27, are a transit peptide targeting the mitochondrion. Thr46 carries the phosphothreonine modification. Ala98 to Lys101 is a binding site for substrate. Lys101 bears the N6-acetyllysine; alternate mark. Lys101 is modified (N6-succinyllysine; alternate). Ser114 carries the phosphoserine modification. Lys115 is modified (N6-acetyllysine; alternate). Residue Lys115 is modified to N6-succinyllysine; alternate. Position 118 is an N6-acetyllysine (Lys118). Gly141 contributes to the substrate binding site. Lys204 is modified (N6-succinyllysine). Residue Lys211 is modified to N6-acetyllysine.

This sequence belongs to the enoyl-CoA hydratase/isomerase family. As to quaternary structure, homohexamer; dimer of trimers. In terms of tissue distribution, liver, fibroblast, muscle. Barely detectable in spleen and kidney.

Its subcellular location is the mitochondrion matrix. It catalyses the reaction a (3S)-3-hydroxyacyl-CoA = a (2E)-enoyl-CoA + H2O. The catalysed reaction is a (3E)-enoyl-CoA = a 4-saturated (2E)-enoyl-CoA. It carries out the reaction (3E)-hexenoyl-CoA = (2E)-hexenoyl-CoA. The enzyme catalyses (3S)-3-hydroxybutanoyl-CoA = (2E)-butenoyl-CoA + H2O. It catalyses the reaction 3-hydroxyisovaleryl-CoA = 3-methylbut-2-enoyl-CoA + H2O. The catalysed reaction is 3-hydroxypropanoyl-CoA = acryloyl-CoA + H2O. It carries out the reaction 3-hydroxybutanoyl-CoA = (2E)-butenoyl-CoA + H2O. The enzyme catalyses 2-methylpropenoyl-CoA + H2O = (S)-3-hydroxyisobutanoyl-CoA. It catalyses the reaction (3S)-hydroxyhexanoyl-CoA = (2E)-hexenoyl-CoA + H2O. The catalysed reaction is (3S)-hydroxydecanoyl-CoA = (2E)-decenoyl-CoA + H2O. It functions in the pathway lipid metabolism; fatty acid beta-oxidation. In terms of biological role, converts unsaturated trans-2-enoyl-CoA species ((2E)-enoyl-CoA) to the corresponding (3S)-3hydroxyacyl-CoA species through addition of a water molecule to the double bond. Catalyzes the hydration of medium- and short-chained fatty enoyl-CoA thioesters from 4 carbons long (C4) up to C16. Has high substrate specificity for crotonyl-CoA ((2E)-butenoyl-CoA) and moderate specificity for acryloyl-CoA, 3-methylcrotonyl-CoA (3-methyl-(2E)-butenoyl-CoA) and methacrylyl-CoA ((2E)-2-methylpropenoyl-CoA). Can bind tiglyl-CoA (2-methylcrotonoyl-CoA), but hydrates only a small amount of this substrate. Plays a key role in the beta-oxidation spiral of short- and medium-chain fatty acid oxidation. At a lower rate than the hydratase reaction, catalyzes the isomerase reaction of trans-3-enoyl-CoA species (such as (3E)-hexenoyl-CoA) to trans-2-enoyl-CoA species (such as (2E)-hexenoyl-CoA), which are subsequently hydrated to 3(S)-3-hydroxyacyl-CoA species (such as (3S)-hydroxyhexanoyl-CoA). This Homo sapiens (Human) protein is Enoyl-CoA hydratase, mitochondrial.